We begin with the raw amino-acid sequence, 1137 residues long: MSRRFAEYESLDLSRVNEEVLADWMQHRLFEESLKSREGAPSFVFYEGPPSANGMPGIHHVMARAIKDTICRYKTMKGFRVDRKAGWDTHGLPVELGVEKSLGITKEDIGKSISVEEYNAACRRDVMKFTKEWEDLTHKMGYWVDMEHPYITYDNRYIETLWWLLAELYKKGLLYKGYTIQPYSPAAGTGLSTHELNQPGCYRDVKDTTCVAQFKIMDPKPEMQLHGDAFFLAWTTTPWTLPSNTALCVGPEIEYLAVQTFNPYNGIPITVVLGKPLLHTLFNPKGECEEIPASYDPAQKLLPYKVIASWKGKELEGMRYEQLIPWVNPGEGAFRVITGDFVTTEDGTGIVHIAPTFGADDDRVAKKSGVPPLMLRDKEGNMRPMVDLAGRYFPTTDLDPVFVEKHMDLPLYDVYAGRYVKNAYDAGKTEKDETLDVELCVMLKMQNRVFRIEKMTHNYPHCWRTDKPVLYYPLDSWFIRTTACKEEMIANNGKIYWKPESTGTGRFGKWLENLQDWNLSRSRYWGTPLPIWRTEDGSEEICIGSVEELYNEIEKAVKAGMMERNPWAGFKPGVYTEENYAKIDLHRPFVDGITLCSPSGQPMRRELDLIDVWFDSGAMPYAQMHYPFENRERVEDGSVFPADFIAEGVDQTRGWFFTLHAIATMISGTSSFKVVVSNGLVLDKKGNKMSKRLGNAVDPFETIKKYGSDPLRWYMITNSSPWDNLKFDTDGVEEVRRKFFGTLYNTYQFFALYANLDGFTGEEESIPFAKRPEIDRWILSELNTLIREVDDQLSDYEPTRAGRAISDFVSENLSNWYVRLSRRRFWAGDMTEDKLSAYQTLYTSLLTVSKLMAPISPFYADRLYRDLTGKDESVHLALFPRPDQSQVDRALEQSMQMAQQISSMVLALRRRVNLKVRQPLATLMIPAIDDEQRRCIESVQPLILSEVNVKELRFVDDSMGILVKRIKPDFKRLGPRYGKVMKALAEAVTAMTQEEIRSLEKAGTFRMEVAGTPVELELADVEIVSEDIPGWLVANEGNLTVALDITVTDELRSEGLARELVNRVQNIRKQSGFEVSDKVDVLLLSNDIMDKVVAEHHDYIAQQIQAESLEISDAVSDGVELDFDDFVLSIQVVKHQG.

Residues 50-60 (PSANGMPGIHH) carry the 'HIGH' region motif. The 'KMSKS' region motif lies at 688–692 (KMSKR). Lys691 serves as a coordination point for ATP.

The protein belongs to the class-I aminoacyl-tRNA synthetase family. IleS type 2 subfamily. Monomer. Zn(2+) is required as a cofactor.

Its subcellular location is the cytoplasm. It catalyses the reaction tRNA(Ile) + L-isoleucine + ATP = L-isoleucyl-tRNA(Ile) + AMP + diphosphate. Functionally, catalyzes the attachment of isoleucine to tRNA(Ile). As IleRS can inadvertently accommodate and process structurally similar amino acids such as valine, to avoid such errors it has two additional distinct tRNA(Ile)-dependent editing activities. One activity is designated as 'pretransfer' editing and involves the hydrolysis of activated Val-AMP. The other activity is designated 'posttransfer' editing and involves deacylation of mischarged Val-tRNA(Ile). The sequence is that of Isoleucine--tRNA ligase from Porphyromonas gingivalis (strain ATCC BAA-308 / W83).